Here is a 176-residue protein sequence, read N- to C-terminus: Jacalin-related lectin 19 (176 aa).

One can recognise a Jacalin-type lectin domain in the interval T12–R154.

It belongs to the jacalin lectin family.

The polypeptide is Jacalin-related lectin 19 (JAL19) (Arabidopsis thaliana (Mouse-ear cress)).